The chain runs to 329 residues: Fructose-1,6-bisphosphatase class 1 (329 aa).

Residues Glu-84, Asp-103, Leu-105, and Asp-106 each coordinate Mg(2+). Substrate contacts are provided by residues 106-109 (DGSS), Asn-196, and Lys-262. A Mg(2+)-binding site is contributed by Glu-268.

It belongs to the FBPase class 1 family. As to quaternary structure, homotetramer. The cofactor is Mg(2+).

Its subcellular location is the cytoplasm. The catalysed reaction is beta-D-fructose 1,6-bisphosphate + H2O = beta-D-fructose 6-phosphate + phosphate. Its pathway is carbohydrate biosynthesis; gluconeogenesis. In Shewanella woodyi (strain ATCC 51908 / MS32), this protein is Fructose-1,6-bisphosphatase class 1.